Here is a 155-residue protein sequence, read N- to C-terminus: Endoribonuclease YbeY (155 aa).

Zn(2+) contacts are provided by His119, His123, and His129.

Belongs to the endoribonuclease YbeY family. Zn(2+) is required as a cofactor.

It localises to the cytoplasm. Single strand-specific metallo-endoribonuclease involved in late-stage 70S ribosome quality control and in maturation of the 3' terminus of the 16S rRNA. The sequence is that of Endoribonuclease YbeY from Mycoplasmopsis synoviae (strain 53) (Mycoplasma synoviae).